The following is a 353-amino-acid chain: MSTKDIFFNPIWDVRMTDTSLRDGSHHKRHQFTKDEVGAIVAALDTAGVPVIEVTHGDGLGGSSFNYGFSKTPEQELIKLAAETAKEAKIAFLMLPGVGTKEDIKEAQNNGGSICRIATHCTEADVSIQHFGLARELGLETVGFLMMSHTIPPEKLAQQARIMADAGCQCVYVVDSAGALVLEGVRDRVAALVAELGSDAQVGFHGHENLGLGVANSVEAVRAGAKQIDGSCRRFGAGAGNAPVEALIGVFDKIGVKTGIDFFDIADAAEEVVAPAMPAECLLDRNALIMGYSGVYSSFLKHAIRQSERYGVPAHQLLHRAGQRKLIGGQEDQLIDIALEIKREQDSGATAAH.

One can recognise a Pyruvate carboxyltransferase domain in the interval 14 to 266 (VRMTDTSLRD…KTGIDFFDIA (253 aa)). 22–23 (RD) contacts substrate. Asp-23 serves as a coordination point for Mn(2+). Catalysis depends on His-26, which acts as the Proton acceptor. Residues Ser-176 and His-205 each coordinate substrate. His-205 and His-207 together coordinate Mn(2+). Tyr-296 is a binding site for substrate.

This sequence belongs to the 4-hydroxy-2-oxovalerate aldolase family.

The catalysed reaction is (S)-4-hydroxy-2-oxopentanoate = acetaldehyde + pyruvate. In Mycobacterium sp. (strain JLS), this protein is 4-hydroxy-2-oxovalerate aldolase 2.